Consider the following 116-residue polypeptide: MMDLDNIPDTQTEAEELEEVVMGLIINSGQARSLAYAALKQAKQGDFAAAKAMMDQSRMALNEAHLVQTKLIEGDAGEGKMKVSLVLVHAQDHLMTSMLARELITELIELHEKLKA.

In terms of domain architecture, PTS EIIA type-3 spans 15–113 (EELEEVVMGL…ITELIELHEK (99 aa)). The Tele-phosphohistidine intermediate role is filled by His89. Phosphohistidine; by HPr is present on His89.

As to quaternary structure, forms a complex with ChbB (EIIB). ChbA is a homotrimer. Requires Mg(2+) as cofactor.

It localises to the cytoplasm. In terms of biological role, the phosphoenolpyruvate-dependent sugar phosphotransferase system (sugar PTS), a major carbohydrate active transport system, catalyzes the phosphorylation of incoming sugar substrates concomitantly with their translocation across the cell membrane. The enzyme II ChbABC PTS system is involved in the transport of the chitin disaccharide N,N'-diacetylchitobiose (GlcNAc2). In Escherichia coli O157:H7, this protein is PTS system N,N'-diacetylchitobiose-specific EIIA component (chbA).